The following is a 121-amino-acid chain: Small ribosomal subunit protein uS13 (121 aa).

The disordered stretch occupies residues 94–121; that stretch reads GLPVRGQKTRNNAHTVKGKPKAIAGKKK. Over residues 109 to 121 the composition is skewed to basic residues; the sequence is VKGKPKAIAGKKK.

The protein belongs to the universal ribosomal protein uS13 family. In terms of assembly, part of the 30S ribosomal subunit. Forms a loose heterodimer with protein S19. Forms two bridges to the 50S subunit in the 70S ribosome.

In terms of biological role, located at the top of the head of the 30S subunit, it contacts several helices of the 16S rRNA. In the 70S ribosome it contacts the 23S rRNA (bridge B1a) and protein L5 of the 50S subunit (bridge B1b), connecting the 2 subunits; these bridges are implicated in subunit movement. Contacts the tRNAs in the A and P-sites. This is Small ribosomal subunit protein uS13 from Onion yellows phytoplasma (strain OY-M).